Reading from the N-terminus, the 512-residue chain is Endoglucanase 14 (512 aa).

Positions 1–22 (MLAAAIELVVIATSCMVRDAHG) are cleaved as a signal peptide. Asparagine 76 carries N-linked (GlcNAc...) asparagine glycosylation. Aspartate 103 serves as the catalytic Nucleophile. 2 N-linked (GlcNAc...) asparagine glycosylation sites follow: asparagine 192 and asparagine 215. Active-site residues include histidine 433, aspartate 484, and glutamate 493.

This sequence belongs to the glycosyl hydrolase 9 (cellulase E) family.

The protein resides in the secreted. It carries out the reaction Endohydrolysis of (1-&gt;4)-beta-D-glucosidic linkages in cellulose, lichenin and cereal beta-D-glucans.. The polypeptide is Endoglucanase 14 (Oryza sativa subsp. japonica (Rice)).